The following is a 122-amino-acid chain: Small ribosomal subunit protein uS13 (122 aa).

The segment at 93–122 (RRGLPVRGQRTKTNARTRKGPKKTIAGKKK) is disordered.

It belongs to the universal ribosomal protein uS13 family. In terms of assembly, part of the 30S ribosomal subunit. Forms a loose heterodimer with protein S19. Forms two bridges to the 50S subunit in the 70S ribosome.

Functionally, located at the top of the head of the 30S subunit, it contacts several helices of the 16S rRNA. In the 70S ribosome it contacts the 23S rRNA (bridge B1a) and protein L5 of the 50S subunit (bridge B1b), connecting the 2 subunits; these bridges are implicated in subunit movement. Contacts the tRNAs in the A and P-sites. The chain is Small ribosomal subunit protein uS13 from Corynebacterium jeikeium (strain K411).